We begin with the raw amino-acid sequence, 526 residues long: Glutamyl-tRNA(Gln) amidotransferase subunit A, mitochondrial (526 aa).

Active-site charge relay system residues include K76 and S171. S195 functions as the Acyl-ester intermediate in the catalytic mechanism.

This sequence belongs to the amidase family. GatA subfamily. As to quaternary structure, subunit of the heterotrimeric GatCAB amidotransferase (AdT) complex, composed of A (QRSL1), B (GATB) and C (GATC) subunits.

Its subcellular location is the mitochondrion. It catalyses the reaction L-glutamyl-tRNA(Gln) + L-glutamine + ATP + H2O = L-glutaminyl-tRNA(Gln) + L-glutamate + ADP + phosphate + H(+). Allows the formation of correctly charged Gln-tRNA(Gln) through the transamidation of misacylated Glu-tRNA(Gln) in the mitochondria. The reaction takes place in the presence of glutamine and ATP through an activated gamma-phospho-Glu-tRNA(Gln). This is Glutamyl-tRNA(Gln) amidotransferase subunit A, mitochondrial from Canis lupus familiaris (Dog).